We begin with the raw amino-acid sequence, 332 residues long: Phosphate acyltransferase (332 aa).

Belongs to the PlsX family. As to quaternary structure, homodimer. Probably interacts with PlsY.

The protein localises to the cytoplasm. The enzyme catalyses a fatty acyl-[ACP] + phosphate = an acyl phosphate + holo-[ACP]. Its pathway is lipid metabolism; phospholipid metabolism. Functionally, catalyzes the reversible formation of acyl-phosphate (acyl-PO(4)) from acyl-[acyl-carrier-protein] (acyl-ACP). This enzyme utilizes acyl-ACP as fatty acyl donor, but not acyl-CoA. The protein is Phosphate acyltransferase of Sulfurimonas denitrificans (strain ATCC 33889 / DSM 1251) (Thiomicrospira denitrificans (strain ATCC 33889 / DSM 1251)).